We begin with the raw amino-acid sequence, 439 residues long: GTPase Der (439 aa).

EngA-type G domains follow at residues 4–169 and 177–352; these read AMVS…PQEE and IKIA…EEYN. GTP contacts are provided by residues 10–17, 57–61, 120–123, 183–190, 230–234, and 295–298; these read GRPNVGKS, DTGGL, NKVD, GKPNVGKS, DTAGI, and NKWD. In terms of domain architecture, KH-like spans 353 to 437; that stretch reads KRITTGLLNN…PVVISTRKRG (85 aa).

It belongs to the TRAFAC class TrmE-Era-EngA-EngB-Septin-like GTPase superfamily. EngA (Der) GTPase family. In terms of assembly, associates with the 50S ribosomal subunit.

GTPase that plays an essential role in the late steps of ribosome biogenesis. The sequence is that of GTPase Der from Thermoanaerobacter pseudethanolicus (strain ATCC 33223 / 39E) (Clostridium thermohydrosulfuricum).